Consider the following 282-residue polypeptide: Cholesterol 25-hydroxylase-like protein 1, member 1 (282 aa).

The N-linked (GlcNAc...) asparagine glycan is linked to Asn3. 3 consecutive transmembrane segments (helical) span residues 40–60 (FFPVLLAFSSYIIFSVPFAVL), 85–107 (MLRTLWTAVYNHLVFVLPAVLIT), and 127–147 (FSGGLGALLVFDTQYFLWHMV). One can recognise a Fatty acid hydroxylase domain in the interval 133-265 (ALLVFDTQYF…FSHWDKIFGT (133 aa)). Residues 144–148 (WHMVH) carry the Histidine box-1 motif. The Histidine box-2 motif lies at 159 to 163 (HAIHH). A Histidine box-3 motif is present at residues 240 to 246 (AHDMHHQ).

Belongs to the sterol desaturase family. Fe cation serves as cofactor.

It is found in the endoplasmic reticulum membrane. In terms of biological role, may catalyze the formation of 25-hydroxycholesterol from cholesterol. The sequence is that of Cholesterol 25-hydroxylase-like protein 1, member 1 (ch25hl1.1) from Danio rerio (Zebrafish).